The chain runs to 124 residues: UPF0357 protein C1687.07 (124 aa).

The signal sequence occupies residues 1 to 24 (MASFHIIVSYVTVVLAIIIAITFA).

It belongs to the UPF0357 family.

This is UPF0357 protein C1687.07 from Schizosaccharomyces pombe (strain 972 / ATCC 24843) (Fission yeast).